The sequence spans 526 residues: G-protein coupled receptor 161 (526 aa).

The Extracellular portion of the chain corresponds to 1-27; it reads MNGSKNGTAVANSTNGLDDNGLMVLES. N-linked (GlcNAc...) asparagine glycans are attached at residues asparagine 2, asparagine 6, and asparagine 12. The helical transmembrane segment at 28–48 threads the bilayer; sequence VSIIIIAILACLGNLVIVVTL. At 49–60 the chain is on the cytoplasmic side; it reads YKKPYLLTPSNK. The chain crosses the membrane as a helical span at residues 61-81; it reads FVFSLTSSNLLLSVLMLPFVV. Residues 82–98 lie on the Extracellular side of the membrane; that stretch reads ASSVRRDWMFGVVWCNF. Cysteine 96 and cysteine 174 are joined by a disulfide. Asparagine 97 carries N-linked (GlcNAc...) asparagine glycosylation. The helical transmembrane segment at 99–119 threads the bilayer; that stretch reads TALLHLLVSSSSMLTLGAIAI. At 120–139 the chain is on the cytoplasmic side; that stretch reads DRYYAVLYPMIYPMKITGNR. The chain crosses the membrane as a helical span at residues 140 to 160; that stretch reads AVLAIVYIWLHSLVGCLPPLF. Residues 161–186 are Extracellular-facing; the sequence is GWSSFEFDRFKWTCTVSWHKEISYTA. The chain crosses the membrane as a helical span at residues 187–207; sequence FWVTWCCLLPLVAMLVCYGVI. Topologically, residues 208–263 are cytoplasmic; that stretch reads FRVARIKARKVYCGSVVVSQEESSSQNNGRKNSNTSTSSSGSRKSLIYSGSQCKAF. The disordered stretch occupies residues 231–250; that stretch reads SSQNNGRKNSNTSTSSSGSR. The helical transmembrane segment at 264-284 threads the bilayer; it reads ITILVVLGTFLTTWGPYVVVI. The Extracellular portion of the chain corresponds to 285 to 300; it reads STEALLGKNSVSPQVE. The chain crosses the membrane as a helical span at residues 301 to 321; that stretch reads TLVSWLSFTSAVCHPLIYGLW. At 322–526 the chain is on the cytoplasmic side; sequence NKTVRKELLG…EEEMEREEKM (205 aa). Residues 505 to 526 are disordered; that stretch reads IDEGIVKDDDDDEEEMEREEKM. Over residues 512–526 the composition is skewed to acidic residues; sequence DDDDDEEEMEREEKM.

The protein belongs to the G-protein coupled receptor 1 family.

The protein localises to the cell projection. It localises to the cilium membrane. Its subcellular location is the cell membrane. Key negative regulator of Shh signaling during neural tube development. Recruited to primary cilia and acts as a regulator of the PKA-dependent basal repression machinery in Shh signaling by increasing cAMP levels, leading to promote the PKA-dependent processing of gli3 into gli3r and repress the Shh signaling. In presence of shh, it is removed from primary cilia, preventing its activity and allowing activation of the Shh signaling. Required in left/right patterning by modulating Ca(2+) levels in the cells surrounding the Kupffer vesicle. The chain is G-protein coupled receptor 161 (gpr161) from Danio rerio (Zebrafish).